We begin with the raw amino-acid sequence, 518 residues long: Golgi-associated olfactory signaling regulator (518 aa).

A signal peptide spans Met-1–Ser-19. Residues Lys-20–Ala-409 lie on the Extracellular side of the membrane. Residues His-38 to Ser-377 form a disordered region. The segment covering Asp-92–Lys-106 has biased composition (basic and acidic residues). An N-linked (GlcNAc...) asparagine glycan is attached at Asn-124. Over residues Thr-138 to Pro-153 the composition is skewed to pro residues. Asn-156 carries N-linked (GlcNAc...) asparagine glycosylation. Polar residues-rich tracts occupy residues Thr-168–Glu-180 and Leu-187–Lys-207. N-linked (GlcNAc...) asparagine glycosylation is found at Asn-188 and Asn-220. Composition is skewed to basic and acidic residues over residues Pro-209 to Asn-220 and Asp-236 to Val-247. Polar residues-rich tracts occupy residues Thr-248–Thr-270 and Ser-276–Tyr-285. Asn-268 carries N-linked (GlcNAc...) asparagine glycosylation. Residues Leu-410–Leu-430 form a helical membrane-spanning segment. Residues Tyr-431–Val-518 lie on the Cytoplasmic side of the membrane. A disordered region spans residues His-477–Val-518. The segment covering Gln-482–Gly-499 has biased composition (pro residues).

The protein resides in the golgi apparatus membrane. In terms of biological role, required for proper function of the olfactory system. May be involved in establishing the acuity of olfactory sensory signaling. The sequence is that of Golgi-associated olfactory signaling regulator (GFY) from Homo sapiens (Human).